Here is a 1062-residue protein sequence, read N- to C-terminus: Probable sucrose-phosphate synthase 3 (1062 aa).

Positions 113–122 (EREQGRRDAT) are enriched in basic and acidic residues. The disordered stretch occupies residues 113 to 141 (EREQGRRDATEDLSEDLSEGEKGDGLGEI). Phosphoserine is present on residues serine 126, serine 130, and serine 156. The segment at 715–735 (MDGDKPSLNGSLEPNSADPVK) is disordered.

This sequence belongs to the glycosyltransferase 1 family. Homodimer or homotetramer.

It catalyses the reaction beta-D-fructose 6-phosphate + UDP-alpha-D-glucose = sucrose 6(F)-phosphate + UDP + H(+). The protein operates within glycan biosynthesis; sucrose biosynthesis; sucrose from D-fructose 6-phosphate and UDP-alpha-D-glucose: step 1/2. Its activity is regulated as follows. Activity is regulated by phosphorylation and moderated by concentration of metabolites and light. Functionally, plays a role in photosynthetic sucrose synthesis by catalyzing the rate-limiting step of sucrose biosynthesis from UDP-glucose and fructose- 6-phosphate. Involved in the regulation of carbon partitioning in the leaves of plants. May regulate the synthesis of sucrose and therefore play a major role as a limiting factor in the export of photoassimilates out of the leaf. Plays a role for sucrose availability that is essential for plant growth and fiber elongation. The chain is Probable sucrose-phosphate synthase 3 (SPS3) from Arabidopsis thaliana (Mouse-ear cress).